An 869-amino-acid chain; its full sequence is Histone deacetylase 4 (869 aa).

Disordered stretches follow at residues 1-25 (MEEA…PSTS), 128-167 (SSSN…TISQ), and 180-218 (RSKG…QVNV). Residues 184–202 (ESNSQSNLMSNSVTANGNG) show a composition bias toward polar residues. Ser251 bears the Phosphoserine mark. A histone deacetylase region spans residues 460–802 (CTTGLGYDQA…VQALIGESDD (343 aa)). Residue His608 is part of the active site.

Belongs to the histone deacetylase family. HD type 2 subfamily. As to quaternary structure, interacts with mef-2. Phosphorylated by serine/threonine-protein kinase kin-29 at Ser-251; the phosphorylation inhibits repression of transcription by mef-2. May be phosphorylated by either cyclic-AMP dependent or cyclic-GMP dependent protein kinases. In terms of tissue distribution, expressed in body-wall muscle cells, hypodermal seam cells and neuronal cells including sensory amphid neuronal processes, the nerve ring, ventral nerve cords and motor neuronal commissures.

Its subcellular location is the nucleus. It carries out the reaction N(6)-acetyl-L-lysyl-[histone] + H2O = L-lysyl-[histone] + acetate. Its function is as follows. Responsible for the deacetylation of lysine residues on the N-terminal part of the core histones (H2A, H2B, H3 and H4). Histone deacetylation gives a tag for epigenetic repression and plays an important role in transcriptional regulation, cell cycle progression and developmental events. Histone deacetylases act via the formation of large multiprotein complexes. Involved in transduction of sensory signals, together with egl-4, kin-29 and mef-2; binding to transcription factor mef-2 enables negative modulation of chemoreceptor gene expression in chemosensory neurons. May be involved in muscle development. This is Histone deacetylase 4 (hda-4) from Caenorhabditis elegans.